A 293-amino-acid chain; its full sequence is Glutamyl-Q tRNA(Asp) synthetase (293 aa).

L-glutamate is bound by residues 26-30 (RYAPS) and D62. The 'HIGH' region motif lies at 29 to 39 (PSPTGALHLGN). Zn(2+) contacts are provided by C118, C120, Y131, and C135. L-glutamate is bound by residues Y178 and R196. Positions 234–238 (KLSKR) match the 'KMSKS' region motif. ATP is bound at residue K237.

This sequence belongs to the class-I aminoacyl-tRNA synthetase family. GluQ subfamily. Requires Zn(2+) as cofactor.

In terms of biological role, catalyzes the tRNA-independent activation of glutamate in presence of ATP and the subsequent transfer of glutamate onto a tRNA(Asp). Glutamate is transferred on the 2-amino-5-(4,5-dihydroxy-2-cyclopenten-1-yl) moiety of the queuosine in the wobble position of the QUC anticodon. In Parasynechococcus marenigrum (strain WH8102), this protein is Glutamyl-Q tRNA(Asp) synthetase.